The following is a 77-amino-acid chain: MQVLVRDNNVDQALRALKKKMQREGIFREMKMRGYYEKPSEKRAREKAEAIRRTRKLARKRAQREGLMSNGRISALR.

The disordered stretch occupies residues Arg-55–Arg-77.

It belongs to the bacterial ribosomal protein bS21 family.

The chain is Small ribosomal subunit protein bS21 from Bartonella quintana (strain Toulouse) (Rochalimaea quintana).